The sequence spans 267 residues: Alkaline ceramidase 3 (267 aa).

The Cytoplasmic segment spans residues 1 to 33 (MAPAADREGYWGPTTSTLDWCEENYSVTWYIAE). Ca(2+)-binding residues include aspartate 19, tryptophan 20, glutamate 22, asparagine 24, and glutamate 33. The helical transmembrane segment at 34-55 (FWNTVSNLIMIIPPMFGAVQSV) threads the bilayer. Residues 56-61 (RDGLEK) lie on the Lumenal side of the membrane. A helical transmembrane segment spans residues 62 to 82 (RYIASYLALTVVGMGSWCFHM). A Zn(2+)-binding site is contributed by histidine 81. At 83 to 87 (TLKYE) the chain is on the cytoplasmic side. A helical transmembrane segment spans residues 88–108 (MQLLDELPMIYSCCIFVYCMF). The Lumenal portion of the chain corresponds to 109–118 (ECFKIKNSVN). Residues 119–139 (YHLLFTLVLFSLIVTTVYLKV) form a helical membrane-spanning segment. Over 140 to 141 (KE) the chain is Cytoplasmic. The chain crosses the membrane as a helical span at residues 142 to 162 (PIFHQVMYGMLVFTLVLRSIY). Residues 163–173 (IVTWVYPWLRG) are Lumenal-facing. Residues 174–194 (LGYTSLGIFLLGFLFWNIDNI) form a helical membrane-spanning segment. The Cytoplasmic segment spans residues 195-215 (FCESLRNFRKKVPPIIGITTQ). The chain crosses the membrane as a helical span at residues 216–236 (FHAWWHILTGLGSYLHILFSL). Zn(2+) is bound by residues histidine 217 and histidine 221. Topologically, residues 237 to 267 (YTRTLYLRYRPKVKFLFGIWPVILFEPLRKH) are lumenal.

Belongs to the alkaline ceramidase family. The cofactor is Zn(2+). As to expression, ubiquitously expressed. Highly expressed in placenta. Expressed in erythrocytes.

Its subcellular location is the endoplasmic reticulum membrane. It localises to the golgi apparatus membrane. It catalyses the reaction an N-acyl-(4R)-4-hydroxysphinganine + H2O = (4R)-hydroxysphinganine + a fatty acid. The catalysed reaction is N-(5Z,8Z,11Z,14Z-eicosatetraenoyl)-sphing-4-enine + H2O = sphing-4-enine + (5Z,8Z,11Z,14Z)-eicosatetraenoate. The enzyme catalyses N-(5Z,8Z,11Z,14Z-eicosatetraenoyl)-sphinganine + H2O = sphinganine + (5Z,8Z,11Z,14Z)-eicosatetraenoate. It carries out the reaction N-(5Z,8Z,11Z,14Z-eicosatetraenoyl)-(4R)-hydroxysphinganine + H2O = (4R)-hydroxysphinganine + (5Z,8Z,11Z,14Z)-eicosatetraenoate. It catalyses the reaction N-(11Z-eicosenoyl)-sphing-4-enine + H2O = (11Z)-eicosenoate + sphing-4-enine. The catalysed reaction is N-(11Z-eicosenoyl)-sphinganine + H2O = (11Z)-eicosenoate + sphinganine. The enzyme catalyses N-(11Z-eicosenoyl)-(4R)-hydroxysphinganine + H2O = (11Z)-eicosenoate + (4R)-hydroxysphinganine. It carries out the reaction N-(9Z-octadecenoyl)-sphing-4-enine + H2O = sphing-4-enine + (9Z)-octadecenoate. It catalyses the reaction N-(9Z-octadecenoyl)-sphinganine + H2O = sphinganine + (9Z)-octadecenoate. The catalysed reaction is N-(9Z-octadecenoyl)-(4R)-hydroxysphinganine + H2O = (4R)-hydroxysphinganine + (9Z)-octadecenoate. The enzyme catalyses an N-acylsphing-4-enine + H2O = sphing-4-enine + a fatty acid. It carries out the reaction an N-acylsphinganine + H2O = sphinganine + a fatty acid. It participates in lipid metabolism; sphingolipid metabolism. Activated by 5 mM Ca(2+) and inhibited by 5 mM Zn(2+). Its function is as follows. Endoplasmic reticulum and Golgi ceramidase that catalyzes the hydrolysis of unsaturated long-chain C18:1-, C20:1- and C20:4-ceramides, dihydroceramides and phytoceramides into sphingoid bases like sphingosine and free fatty acids at alkaline pH. Ceramides, sphingosine, and its phosphorylated form sphingosine-1-phosphate are bioactive lipids that mediate cellular signaling pathways regulating several biological processes including cell proliferation, apoptosis and differentiation. Controls the generation of sphingosine in erythrocytes, and thereby sphingosine-1-phosphate in plasma. Through the regulation of ceramides and sphingosine-1-phosphate homeostasis in the brain may play a role in neurons survival and function. By regulating the levels of pro-inflammatory ceramides in immune cells and tissues, may modulate the inflammatory response. The protein is Alkaline ceramidase 3 (ACER3) of Homo sapiens (Human).